The following is a 295-amino-acid chain: UDP-N-acetylenolpyruvoylglucosamine reductase (295 aa).

Residues 23 to 188 (QVGGPADFLA…ISAKFALKPG (166 aa)) form the FAD-binding PCMH-type domain. The active site involves arginine 167. The Proton donor role is filled by serine 217. The active site involves glutamate 287.

It belongs to the MurB family. Requires FAD as cofactor.

The protein resides in the cytoplasm. It catalyses the reaction UDP-N-acetyl-alpha-D-muramate + NADP(+) = UDP-N-acetyl-3-O-(1-carboxyvinyl)-alpha-D-glucosamine + NADPH + H(+). The protein operates within cell wall biogenesis; peptidoglycan biosynthesis. Functionally, cell wall formation. In Streptococcus equi subsp. equi (strain 4047), this protein is UDP-N-acetylenolpyruvoylglucosamine reductase.